The following is a 650-amino-acid chain: Chaperone protein HtpG (650 aa).

The a; substrate-binding stretch occupies residues 1–344 (MSKHTHSFQA…SADLPLNVSR (344 aa)). Positions 345–582 (ELLQESRDVR…DGGMSTQLAR (238 aa)) are b. The c stretch occupies residues 583–650 (LLKQAGQSAP…YVKRVNALLA (68 aa)).

This sequence belongs to the heat shock protein 90 family. In terms of assembly, homodimer.

It is found in the cytoplasm. In terms of biological role, molecular chaperone. Has ATPase activity. The protein is Chaperone protein HtpG of Acidovorax sp. (strain JS42).